We begin with the raw amino-acid sequence, 545 residues long: Delta 8-(E)-sphingolipid desaturase (545 aa).

Residues 1–82 enclose the Cytochrome b5 heme-binding domain; sequence MASHTKDALL…MLAFQIGRIQ (82 aa). The heme site is built by H42 and H65. The segment at 97–124 is disordered; it reads FRHYDENADSEEDDTSGQSQPPSPIFDA. The helical transmembrane segment at 227-247 threads the bilayer; it reads LGWYSVSAVFLGCFWHQLVFS. The Histidine box-1 motif lies at 249–253; it reads HDAGH. The helical transmembrane segment at 262 to 282 threads the bilayer; sequence VDSIIGILIADFLGGLSLGWW. A Histidine box-2 motif is present at residues 286–290; it reads HNVHH. The next 2 membrane-spanning stretches (helical) occupy residues 382–402 and 408–428; these read IAGQ…CSIP and LSFL…ITLS. A Histidine box-3 motif is present at residues 470 to 474; sequence QAIHH.

The protein belongs to the fatty acid desaturase type 1 family.

The protein localises to the membrane. It catalyses the reaction an N-acylsphing-4-enine + 2 Fe(II)-[cytochrome b5] + O2 + 2 H(+) = a (4E,8E)-4-sphinga-4,8-dienine ceramide + 2 Fe(III)-[cytochrome b5] + 2 H2O. It participates in lipid metabolism; sphingolipid metabolism. Functionally, delta(8)-fatty-acid desaturase which introduces a double bond at the 8-position in the long-chain base (LCB) of ceramides. Required for the formation of the di-unsaturated sphingoid base (E,E)-sphinga-4,8-dienine during glucosylceramide (GluCer) biosynthesis. Plays an important role in conidiation. The chain is Delta 8-(E)-sphingolipid desaturase from Emericella nidulans (strain FGSC A4 / ATCC 38163 / CBS 112.46 / NRRL 194 / M139) (Aspergillus nidulans).